A 115-amino-acid chain; its full sequence is Large ribosomal subunit protein bL20 (115 aa).

It belongs to the bacterial ribosomal protein bL20 family.

In terms of biological role, binds directly to 23S ribosomal RNA and is necessary for the in vitro assembly process of the 50S ribosomal subunit. It is not involved in the protein synthesizing functions of that subunit. The protein is Large ribosomal subunit protein bL20 of Prochlorococcus marinus (strain SARG / CCMP1375 / SS120).